The primary structure comprises 779 residues: Angiomotin-like protein 2 (779 aa).

2 disordered regions span residues 41–215 (GGAG…QYPH) and 263–308 (QYLQ…TSGS). 2 stretches are compositionally biased toward basic and acidic residues: residues 100 to 112 (KGEELPTYEEAKA) and 141 to 152 (RRQDEALRELRH). A required for interaction with CDH5 region spans residues 101-307 (GEELPTYEEA…SAQASSATSG (207 aa)). Position 107 is a phosphotyrosine; by FGFR1 (Tyr-107). The span at 160–169 (ERLLQLSLER) shows a compositional bias: low complexity. Residues 177–193 (HMSSSHSFPQLARNQQG) are compositionally biased toward polar residues. Over residues 196 to 213 (LRGPPAEGPESRGPPPQY) the composition is skewed to pro residues. The interval 220–307 (HETTTAVTDP…SAQASSATSG (88 aa)) is required for interaction with CDH1. The segment covering 298–308 (SAQASSATSGS) has biased composition (low complexity). Positions 308-581 (SAHLAQMEAV…KYLEERAMRQ (274 aa)) form a coiled coil. Residues Lys-347 and Lys-408 each participate in a glycyl lysine isopeptide (Lys-Gly) (interchain with G-Cter in ubiquitin) cross-link. Disordered regions lie at residues 522–543 (RAQQRQAGAPGGSSGSGGSPEL) and 679–753 (TQGW…GCSS). A compositionally biased stretch (gly residues) spans 530 to 539 (APGGSSGSGG). Polar residues-rich tracts occupy residues 680 to 690 (QGWQGLSSSER) and 725 to 740 (DGSTQTEGPPDSTSTC). Residues Ser-759 and Ser-762 each carry the phosphoserine modification. The short motif at 776-779 (EILI) is the PDZ-binding element.

Belongs to the angiomotin family. In terms of assembly, part of a complex composed of AMOTL2, MAGI1 and CDH5, within the complex AMOTL2 acts as a scaffold protein for the interaction of MAGI1 with CDH5. The complex is required for coupling actin fibers to cell junctions in endothelial cells. Within the complex AMOTL2 (via its N-terminus) interacts with CDH5. Interacts (via N-terminus) with MAGI1. Interacts (via N-terminus) with ACTB; the interaction facilitates binding of cell junction complexes to actin fibers in endothelial cells. Interacts with CDH1; the interaction may facilitate binding of radial actin fibers to cell junction complexes. Interacts with SRC. Interacts with YAP1; the interaction is required for ubiquitination of AMOTL2 and localization of YAP1 to tight junctions. Interacts with WWP1; the interaction facilitates WWP1 interaction with the Crumbs complex and subsequent WWP1 translocation to the plasma membrane. WWP1 interaction with the Crumbs complex promotes WWP1 monoubiquitination of AMOTL2 which subsequently activates the Hippo signaling pathway. When ubiquitinated interacts with LATS2 (via UBA domain); the interaction promotes LATS2 phosphorylation of YAP1. Interacts (via PPXY motif) with WWTR1/TAZ (via WW domain); the interaction promotes WWTR1/TAZ localization to the cytoplasm and thereby inhibition of its transcriptional properties. Interacts with PHLDB2; interaction may facilitate PHLDB2 localization to the myotube podosome cortex that surrounds the core. In terms of processing, monoubiquitinated at Lys-347 and Lys-408 by Crumbs complex-bound WWP1. De-ubiquitinated at Lys-347 and Lys-408 by USP9X; the interaction may be promoted by cell contact inhibition. Deubiquitination of AMOTL2 negatively regulates Hippo signaling activation. Post-translationally, phosphorylation at Tyr-107 is necessary for efficient binding to SRC and synergistically functioning with SRC to activate the downstream MAPK pathway.

It localises to the recycling endosome. The protein resides in the cytoplasm. It is found in the cell projection. Its subcellular location is the podosome. The protein localises to the cell junction. Its function is as follows. Regulates the translocation of phosphorylated SRC to peripheral cell-matrix adhesion sites. Required for proper architecture of actin filaments. Plays a role in coupling actin fibers to cell junctions in endothelial cells and is therefore required for correct endothelial cell morphology via facilitating transcellular transmission of mechanical force resulting in endothelial cell elongation. Required for the anchoring of radial actin fibers to CDH1 junction complexes at the cell membrane which facilitates organization of radial actin fiber structure and cellular response to contractile forces. This contributes to maintenance of cell area, size, shape, epithelial sheet organization and trophectoderm cell properties that facilitate blastocyst zona hatching. Inhibits the Wnt/beta-catenin signaling pathway, probably by recruiting CTNNB1 to recycling endosomes and hence preventing its translocation to the nucleus. Participates in angiogenesis. Activates the Hippo signaling pathway in response to cell contact inhibition via interaction with and ubiquitination by Crumbs complex-bound WWP1. Ubiquitinated AMOTL2 then interacts with LATS2 which in turn phosphorylates YAP1, excluding it from the nucleus and localizing it to the cytoplasm and tight junctions, therefore ultimately repressing YAP1-driven transcription of target genes. Acts to inhibit WWTR1/TAZ transcriptional coactivator activity via sequestering WWTR1/TAZ in the cytoplasm and at tight junctions. Regulates the size and protein composition of the podosome cortex and core at myofibril neuromuscular junctions. Selectively promotes FGF-induced MAPK activation through SRC. May play a role in the polarity, proliferation and migration of endothelial cells. The protein is Angiomotin-like protein 2 of Homo sapiens (Human).